The following is a 333-amino-acid chain: tRNA-modifying protein YgfZ (333 aa).

Folate-binding residues include Trp33 and Trp195.

This sequence belongs to the tRNA-modifying YgfZ family.

The protein localises to the cytoplasm. In terms of biological role, folate-binding protein involved in regulating the level of ATP-DnaA and in the modification of some tRNAs. It is probably a key factor in regulatory networks that act via tRNA modification, such as initiation of chromosomal replication. The chain is tRNA-modifying protein YgfZ from Pectobacterium carotovorum subsp. carotovorum (strain PC1).